A 280-amino-acid polypeptide reads, in one-letter code: Putative pyruvate, phosphate dikinase regulatory protein (280 aa).

G158–T165 is a binding site for ADP.

The protein belongs to the pyruvate, phosphate/water dikinase regulatory protein family. PDRP subfamily.

The catalysed reaction is N(tele)-phospho-L-histidyl/L-threonyl-[pyruvate, phosphate dikinase] + ADP = N(tele)-phospho-L-histidyl/O-phospho-L-threonyl-[pyruvate, phosphate dikinase] + AMP + H(+). The enzyme catalyses N(tele)-phospho-L-histidyl/O-phospho-L-threonyl-[pyruvate, phosphate dikinase] + phosphate + H(+) = N(tele)-phospho-L-histidyl/L-threonyl-[pyruvate, phosphate dikinase] + diphosphate. Functionally, bifunctional serine/threonine kinase and phosphorylase involved in the regulation of the pyruvate, phosphate dikinase (PPDK) by catalyzing its phosphorylation/dephosphorylation. In Lactobacillus gasseri (strain ATCC 33323 / DSM 20243 / BCRC 14619 / CIP 102991 / JCM 1131 / KCTC 3163 / NCIMB 11718 / NCTC 13722 / AM63), this protein is Putative pyruvate, phosphate dikinase regulatory protein.